The chain runs to 514 residues: Na(+)/H(+) antiporter NhaB (514 aa).

12 helical membrane passes run 23 to 43 (LALL…PFIA), 52 to 72 (IFTL…LLAI), 97 to 117 (LLLM…LFIF), 120 to 140 (LLLS…AAAF), 144 to 164 (FLDA…FYGI), 202 to 222 (LMMH…VGEP), 238 to 258 (FFLR…LTCL), 303 to 323 (ALIG…VGLI), 353 to 373 (FTAL…QSLF), 391 to 411 (LFYL…VGTI), 447 to 467 (ATPN…APLI), and 475 to 495 (VWMA…CVEF).

The protein belongs to the NhaB Na(+)/H(+) (TC 2.A.34) antiporter family.

Its subcellular location is the cell inner membrane. It catalyses the reaction 2 Na(+)(in) + 3 H(+)(out) = 2 Na(+)(out) + 3 H(+)(in). Na(+)/H(+) antiporter that extrudes sodium in exchange for external protons. This chain is Na(+)/H(+) antiporter NhaB, found in Escherichia fergusonii (strain ATCC 35469 / DSM 13698 / CCUG 18766 / IAM 14443 / JCM 21226 / LMG 7866 / NBRC 102419 / NCTC 12128 / CDC 0568-73).